A 466-amino-acid polypeptide reads, in one-letter code: Asparagine--tRNA ligase (466 aa).

Belongs to the class-II aminoacyl-tRNA synthetase family. Homodimer.

The protein localises to the cytoplasm. It carries out the reaction tRNA(Asn) + L-asparagine + ATP = L-asparaginyl-tRNA(Asn) + AMP + diphosphate + H(+). In Buchnera aphidicola subsp. Baizongia pistaciae (strain Bp), this protein is Asparagine--tRNA ligase.